Consider the following 87-residue polypeptide: MVFLLCFFLVADVSYGINKDCLLPKVVGFCRARFPRYYYNSSSRRCEKFIYGGCGGNANNFSSYYECHIKCFGPRAIIFPEDSPKEN.

A signal peptide spans 1–16 (MVFLLCFFLVADVSYG). The BPTI/Kunitz inhibitor domain occupies 21-71 (CLLPKVVGFCRARFPRYYYNSSSRRCEKFIYGGCGGNANNFSSYYECHIKC). Disulfide bonds link cysteine 21–cysteine 71, cysteine 30–cysteine 54, and cysteine 46–cysteine 67. Positions 76–87 (AIIFPEDSPKEN) are excised as a propeptide.

The protein belongs to the venom Kunitz-type family. Sea anemone type 2 potassium channel toxin subfamily.

Its subcellular location is the secreted. It is found in the nematocyst. In terms of biological role, kunitz peptide that directly activates neuronal GIRK1/2 (KCNJ3/KCNJ6) channels (EC(50)=80.9 uM) resulting in larger K+ currents. This activation is independent from Gi/o protein activity, and has only a minor effect on Kv1.6/KCNA6 channels (13.5% inhibition at 1 uM). Serine protease inhibitor that inhibits both tissue and plasma kallikreins. Has hemolytic activity. The polypeptide is U-actitoxin-Avd3n (Anemonia viridis (Snakelocks anemone)).